A 103-amino-acid polypeptide reads, in one-letter code: N(4)-acetylcytidine amidohydrolase (103 aa).

Positions 6-101 constitute an ASCH domain; it reads ITFFQRFQDD…QTQFYVIEFK (96 aa). K21 functions as the Proton acceptor in the catalytic mechanism. T24 functions as the Nucleophile in the catalytic mechanism. E74 serves as the catalytic Proton donor.

This sequence belongs to the N(4)-acetylcytidine amidohydrolase family.

The enzyme catalyses N(4)-acetylcytidine + H2O = cytidine + acetate + H(+). It catalyses the reaction N(4)-acetyl-2'-deoxycytidine + H2O = 2'-deoxycytidine + acetate + H(+). The catalysed reaction is N(4)-acetylcytosine + H2O = cytosine + acetate + H(+). Its function is as follows. Catalyzes the hydrolysis of N(4)-acetylcytidine (ac4C). The chain is N(4)-acetylcytidine amidohydrolase (yqfB) from Escherichia coli (strain SE11).